A 359-amino-acid polypeptide reads, in one-letter code: Protein Wnt-5b (359 aa).

An N-terminal signal peptide occupies residues 1–17; that stretch reads MPSLLLLFTAALLSSWA. Residues Cys83 and Cys94 are joined by a disulfide bond. 2 N-linked (GlcNAc...) asparagine glycosylation sites follow: Asn93 and Asn99. Disulfide bonds link Cys133–Cys141, Cys143–Cys161, Cys217–Cys231, Cys219–Cys226, Cys288–Cys319, Cys304–Cys314, Cys318–Cys358, Cys334–Cys349, Cys336–Cys346, and Cys341–Cys342. A lipid anchor (O-palmitoleoyl serine; by PORCN) is attached at Ser223. Asn291 and Asn305 each carry an N-linked (GlcNAc...) asparagine glycan.

This sequence belongs to the Wnt family. Interacts with PORCN. In terms of processing, palmitoleoylation is required for efficient binding to frizzled receptors. Depalmitoleoylation leads to Wnt signaling pathway inhibition.

The protein resides in the secreted. Its subcellular location is the extracellular space. It is found in the extracellular matrix. In terms of biological role, ligand for members of the frizzled family of seven transmembrane receptors. Probable developmental protein. May be a signaling molecule which affects the development of discrete regions of tissues. Is likely to signal over only few cell diameters. The chain is Protein Wnt-5b (WNT5B) from Pongo abelii (Sumatran orangutan).